The following is an 843-amino-acid chain: Translation initiation factor IF-2 (843 aa).

The interval 94-259 (QRSPEEIEAE…AHGFQSPTGP (166 aa)) is disordered. The span at 96 to 135 (SPEEIEAERKREMDERRAVENAARQKAEEEAKRRAEEDAR) shows a compositional bias: basic and acidic residues. Positions 136-177 (NQPAAGQPASAPAQPVAAAEPVREAPAPAAAAPAPASAAPSA) are enriched in low complexity. 2 stretches are compositionally biased toward basic and acidic residues: residues 178-219 (DARK…EKAP) and 227-236 (TTDEESDSFR). The segment covering 237–250 (RGGRGKSRLKKRNA) has biased composition (basic residues). The tr-type G domain occupies 343–512 (SRAPVVTVMG…LLQAEVLELK (170 aa)). The interval 352–359 (GHVDHGKT) is G1. Residue 352–359 (GHVDHGKT) participates in GTP binding. The interval 377–381 (GITQH) is G2. The interval 398–401 (DTPG) is G3. GTP-binding positions include 398–402 (DTPGH) and 452–455 (NKID). Residues 452 to 455 (NKID) form a G4 region. Positions 488–490 (SAK) are G5.

This sequence belongs to the TRAFAC class translation factor GTPase superfamily. Classic translation factor GTPase family. IF-2 subfamily.

The protein localises to the cytoplasm. Functionally, one of the essential components for the initiation of protein synthesis. Protects formylmethionyl-tRNA from spontaneous hydrolysis and promotes its binding to the 30S ribosomal subunits. Also involved in the hydrolysis of GTP during the formation of the 70S ribosomal complex. The sequence is that of Translation initiation factor IF-2 from Pseudomonas savastanoi pv. phaseolicola (strain 1448A / Race 6) (Pseudomonas syringae pv. phaseolicola (strain 1448A / Race 6)).